A 498-amino-acid chain; its full sequence is Galactose-1-phosphate uridylyltransferase (498 aa).

This sequence belongs to the galactose-1-phosphate uridylyltransferase type 2 family.

Its subcellular location is the cytoplasm. It carries out the reaction alpha-D-galactose 1-phosphate + UDP-alpha-D-glucose = alpha-D-glucose 1-phosphate + UDP-alpha-D-galactose. It functions in the pathway carbohydrate metabolism; galactose metabolism. The chain is Galactose-1-phosphate uridylyltransferase from Clostridium perfringens (strain 13 / Type A).